Consider the following 377-residue polypeptide: Succinyl-diaminopimelate desuccinylase (377 aa).

Position 66 (His66) interacts with Zn(2+). Residue Asp68 is part of the active site. Asp99 is a binding site for Zn(2+). Catalysis depends on Glu133, which acts as the Proton acceptor. Glu134, Glu163, and His349 together coordinate Zn(2+).

This sequence belongs to the peptidase M20A family. DapE subfamily. In terms of assembly, homodimer. Requires Zn(2+) as cofactor. The cofactor is Co(2+).

The catalysed reaction is N-succinyl-(2S,6S)-2,6-diaminopimelate + H2O = (2S,6S)-2,6-diaminopimelate + succinate. It functions in the pathway amino-acid biosynthesis; L-lysine biosynthesis via DAP pathway; LL-2,6-diaminopimelate from (S)-tetrahydrodipicolinate (succinylase route): step 3/3. Catalyzes the hydrolysis of N-succinyl-L,L-diaminopimelic acid (SDAP), forming succinate and LL-2,6-diaminopimelate (DAP), an intermediate involved in the bacterial biosynthesis of lysine and meso-diaminopimelic acid, an essential component of bacterial cell walls. This Legionella pneumophila (strain Paris) protein is Succinyl-diaminopimelate desuccinylase.